The chain runs to 342 residues: MLKIGIVGGTGYTGVELLRILSQHPEVNIEAITSRKEAGMDVAQLFPSLRGRIELKFSDPAEANLEKCDVVFFATPNGIAMKQVPSLLDAGVRIIDLAADFRIKDIAVWEKWYGMPHACPELVAEAVYGLPEINRDRIKTARLIANPGCYPTAVQLGFLPLVESGAADLDHLVADAKSGVSGAGRNAEIHTLFAEAADNFKAYGVSGHRHLPEIRQGLSQAAKHPVGLTFVPHLTPMIRGIHATLYVKLLKEVDLQALYENRYVNEPFVDVLPAGSHPETRSVRGSNLCRIAVHRPQGGDTAVILSVTDNLVKGAAGQAVQNMNLMFGLPETLAITHLPLFP.

Cys-149 is an active-site residue.

This sequence belongs to the NAGSA dehydrogenase family. Type 1 subfamily.

The protein localises to the cytoplasm. The enzyme catalyses N-acetyl-L-glutamate 5-semialdehyde + phosphate + NADP(+) = N-acetyl-L-glutamyl 5-phosphate + NADPH + H(+). It participates in amino-acid biosynthesis; L-arginine biosynthesis; N(2)-acetyl-L-ornithine from L-glutamate: step 3/4. Its function is as follows. Catalyzes the NADPH-dependent reduction of N-acetyl-5-glutamyl phosphate to yield N-acetyl-L-glutamate 5-semialdehyde. The chain is N-acetyl-gamma-glutamyl-phosphate reductase from Nitrosospira multiformis (strain ATCC 25196 / NCIMB 11849 / C 71).